The sequence spans 431 residues: Putative F-box/FBD/LRR-repeat protein At4g26350 (431 aa).

Residues 1-47 (MDIISQCPDHLLLRILSFIPTKDVIVTSLLSKRWGSLWRWVPKLEYD) enclose the F-box domain. 5 LRR repeats span residues 52 to 78 (NMRFVKFVYRSLLQNNAPVLESLHLKN), 85 to 109 (CRTVDIGGWIDIAVSRRVRELEISI), 132 to 159 (ILTIKHCHLVDVPLAVCLPSLKKLHLRC), 160 to 185 (IGWAYNATLLRLISGCTNLEELRLAR), and 309 to 334 (CTQGWWDLLTHMLQGSPKLRFLTLTN). An FBD domain is found at 348 to 398 (CWKRPSSVPACLLSSLQAFTWSGYKGRQGDKEVVKYVLRNATGLKKRIFIS).

This Arabidopsis thaliana (Mouse-ear cress) protein is Putative F-box/FBD/LRR-repeat protein At4g26350.